Reading from the N-terminus, the 94-residue chain is Large ribosomal subunit protein bL25 (94 aa).

It belongs to the bacterial ribosomal protein bL25 family. In terms of assembly, part of the 50S ribosomal subunit; part of the 5S rRNA/L5/L18/L25 subcomplex. Contacts the 5S rRNA. Binds to the 5S rRNA independently of L5 and L18.

Functionally, this is one of the proteins that binds to the 5S RNA in the ribosome where it forms part of the central protuberance. This is Large ribosomal subunit protein bL25 from Escherichia coli O6:K15:H31 (strain 536 / UPEC).